We begin with the raw amino-acid sequence, 516 residues long: MATSRDRLGTLEAEGSSGRQGYSGVEVVLSSDPATPAPLCPHELGPTLLFVKVNQGKEETRRFYACSACRDRKDCNFFQWEDEKLSGARLAAREAHNRSCQPPLSRSQCVERYLKFIELPLSQRKFCQSCQQLLLPDDEEKHHEHQVVGDVSITQLKRPSKLLYPLENKKTNAQYLFADRSCLFLVDLLSNLGFRRVLCVGTPRLHELIRLKESGGTKSNIRSLLLDIDFRYSQFYMEDSFCHYNMFNHHFFDGKAALEVCKTFLQEDKGEGVIMVTDPPFGGLVEPLAVTFKKLIAMWKEGHSQDNSQKELPIFWIFPYFFESRICQFFPSFCMLDYQVVDYDNHALYKHGKTGRKQSPVRIFTNIPPNKIILPIEEGYRFCPLCQRYVSLENQHCEHCNSCTSKDGRKWNHCFLCKKCVKPSWIHCSICNHCALPDHSCKGPKDGCFICGELDHKRSACPNISTSKKVNKAVRKQKQRKSNKMKMETTKGQSMNHTSATRKKKRRERTHQYLCS.

Residues cysteine 40, histidine 42, cysteine 66, cysteine 75, cysteine 127, cysteine 130, histidine 142, and histidine 145 each coordinate Zn(2+). A GRF-type zinc finger spans residues 40–84 (CPHELGPTLLFVKVNQGKEETRRFYACSACRDRKDCNFFQWEDEK). S-adenosyl-L-methionine is bound by residues 174–177 (QYLF), arginine 204, aspartate 227, 245–246 (NM), and aspartate 278. Residues 339–360 (QVVDYDNHALYKHGKTGRKQSP) form a regulatory loop region. Cysteine 383, cysteine 386, histidine 396, cysteine 397, cysteine 400, cysteine 403, histidine 413, cysteine 414, cysteine 417, cysteine 420, histidine 427, cysteine 428, cysteine 431, cysteine 434, histidine 439, and cysteine 441 together coordinate Zn(2+). The DHHC domain occupies 398–448 (EHCNSCTSKDGRKWNHCFLCKKCVKPSWIHCSICNHCALPDHSCKGPKDGC). Residues 446-463 (DGCFICGELDHKRSACPN) form a CCHC-type zinc finger. Positions 472 to 484 (KAVRKQKQRKSNK) are enriched in basic residues. A disordered region spans residues 472–516 (KAVRKQKQRKSNKMKMETTKGQSMNHTSATRKKKRRERTHQYLCS). Polar residues predominate over residues 490-499 (TKGQSMNHTS). The segment covering 500-509 (ATRKKKRRER) has biased composition (basic residues).

It belongs to the ZCCHC4 family. Interacts with components of the ASC-1 complex TRIP4, ASCC1, ASCC2 and ASCC3. Interact with AHCYL1 and AHCYL2. Interact with YTHDC2.

It is found in the cytoplasm. Its subcellular location is the nucleus. The protein resides in the nucleolus. The catalysed reaction is adenosine(4220) in 28S rRNA + S-adenosyl-L-methionine = N(6)-methyladenosine(4220) in 28S rRNA + S-adenosyl-L-homocysteine + H(+). RRNA N6-methyltransferase that specifically methylates the adenine in position 4220 of 28S rRNA. N6-methylation of adenine(4220) in 28S rRNA is required for translation. The sequence is that of rRNA N(6)-adenosine-methyltransferase ZCCHC4 from Bos taurus (Bovine).